We begin with the raw amino-acid sequence, 427 residues long: Serine--tRNA ligase (427 aa).

Residue 231 to 233 participates in L-serine binding; sequence TAE. An ATP-binding site is contributed by 262–264; the sequence is RSE. Glutamate 285 is a binding site for L-serine. 349–352 provides a ligand contact to ATP; the sequence is EISS. Residue serine 385 coordinates L-serine.

This sequence belongs to the class-II aminoacyl-tRNA synthetase family. Type-1 seryl-tRNA synthetase subfamily. In terms of assembly, homodimer. The tRNA molecule binds across the dimer.

The protein resides in the cytoplasm. The catalysed reaction is tRNA(Ser) + L-serine + ATP = L-seryl-tRNA(Ser) + AMP + diphosphate + H(+). It catalyses the reaction tRNA(Sec) + L-serine + ATP = L-seryl-tRNA(Sec) + AMP + diphosphate + H(+). Its pathway is aminoacyl-tRNA biosynthesis; selenocysteinyl-tRNA(Sec) biosynthesis; L-seryl-tRNA(Sec) from L-serine and tRNA(Sec): step 1/1. Functionally, catalyzes the attachment of serine to tRNA(Ser). Is also able to aminoacylate tRNA(Sec) with serine, to form the misacylated tRNA L-seryl-tRNA(Sec), which will be further converted into selenocysteinyl-tRNA(Sec). The protein is Serine--tRNA ligase of Brucella abortus (strain S19).